We begin with the raw amino-acid sequence, 103 residues long: Small ribosomal subunit protein uS10 (103 aa).

The protein belongs to the universal ribosomal protein uS10 family. In terms of assembly, part of the 30S ribosomal subunit.

Its function is as follows. Involved in the binding of tRNA to the ribosomes. The sequence is that of Small ribosomal subunit protein uS10 from Campylobacter hominis (strain ATCC BAA-381 / DSM 21671 / CCUG 45161 / LMG 19568 / NCTC 13146 / CH001A).